The primary structure comprises 199 residues: ATP-dependent Clp protease proteolytic subunit (199 aa).

S99 (nucleophile) is an active-site residue. H124 is a catalytic residue.

Belongs to the peptidase S14 family. As to quaternary structure, fourteen ClpP subunits assemble into 2 heptameric rings which stack back to back to give a disk-like structure with a central cavity, resembling the structure of eukaryotic proteasomes.

The protein localises to the cytoplasm. The catalysed reaction is Hydrolysis of proteins to small peptides in the presence of ATP and magnesium. alpha-casein is the usual test substrate. In the absence of ATP, only oligopeptides shorter than five residues are hydrolyzed (such as succinyl-Leu-Tyr-|-NHMec, and Leu-Tyr-Leu-|-Tyr-Trp, in which cleavage of the -Tyr-|-Leu- and -Tyr-|-Trp bonds also occurs).. Cleaves peptides in various proteins in a process that requires ATP hydrolysis. Has a chymotrypsin-like activity. Plays a major role in the degradation of misfolded proteins. The protein is ATP-dependent Clp protease proteolytic subunit of Lactococcus lactis subsp. lactis (strain IL1403) (Streptococcus lactis).